An 87-amino-acid polypeptide reads, in one-letter code: Small ribosomal subunit protein uS15c (87 aa).

The protein belongs to the universal ribosomal protein uS15 family. Part of the 30S ribosomal subunit.

The protein resides in the plastid. The protein localises to the chloroplast. The protein is Small ribosomal subunit protein uS15c (rps15) of Nicotiana tabacum (Common tobacco).